Here is a 183-residue protein sequence, read N- to C-terminus: ATP-dependent protease subunit HslV (183 aa).

Thr-13 is a catalytic residue. Positions 168, 171, and 174 each coordinate Na(+).

Belongs to the peptidase T1B family. HslV subfamily. As to quaternary structure, a double ring-shaped homohexamer of HslV is capped on each side by a ring-shaped HslU homohexamer. The assembly of the HslU/HslV complex is dependent on binding of ATP.

Its subcellular location is the cytoplasm. It catalyses the reaction ATP-dependent cleavage of peptide bonds with broad specificity.. Allosterically activated by HslU binding. Protease subunit of a proteasome-like degradation complex believed to be a general protein degrading machinery. The polypeptide is ATP-dependent protease subunit HslV (Xanthomonas campestris pv. campestris (strain ATCC 33913 / DSM 3586 / NCPPB 528 / LMG 568 / P 25)).